The primary structure comprises 273 residues: Protein ALUMINUM SENSITIVE 3 (273 aa).

A run of 7 helical transmembrane segments spans residues 14–34 (WLIV…VVLL), 51–71 (IYSV…LQFI), 76–96 (NSGW…YTAG), 107–127 (YVAG…LVLL), 136–156 (YMIP…GVTM), 191–213 (ALVI…SLPG), and 228–248 (AIQL…VSSI).

It belongs to the UPF0014 family. In terms of tissue distribution, expressed in roots, leaves, stems, and flowers.

The protein resides in the cell membrane. Its function is as follows. Required for aluminum (Al) resistance/tolerance, probably by translocating Al from sensitive tissues such as growing roots to tissues less sensisitive to the toxic effects of Al. This chain is Protein ALUMINUM SENSITIVE 3 (ALS3), found in Arabidopsis thaliana (Mouse-ear cress).